Here is a 442-residue protein sequence, read N- to C-terminus: 3-phosphoshikimate 1-carboxyvinyltransferase (442 aa).

Positions 25, 26, and 30 each coordinate 3-phosphoshikimate. Lysine 25 is a phosphoenolpyruvate binding site. Residues glycine 96 and arginine 124 each coordinate phosphoenolpyruvate. 3-phosphoshikimate contacts are provided by serine 171, serine 172, glutamine 173, serine 203, aspartate 325, and lysine 352. Glutamine 173 is a binding site for phosphoenolpyruvate. Residue aspartate 325 is the Proton acceptor of the active site. Residues arginine 356, arginine 400, and lysine 425 each coordinate phosphoenolpyruvate.

This sequence belongs to the EPSP synthase family. In terms of assembly, monomer.

The protein localises to the cytoplasm. It catalyses the reaction 3-phosphoshikimate + phosphoenolpyruvate = 5-O-(1-carboxyvinyl)-3-phosphoshikimate + phosphate. It functions in the pathway metabolic intermediate biosynthesis; chorismate biosynthesis; chorismate from D-erythrose 4-phosphate and phosphoenolpyruvate: step 6/7. Its function is as follows. Catalyzes the transfer of the enolpyruvyl moiety of phosphoenolpyruvate (PEP) to the 5-hydroxyl of shikimate-3-phosphate (S3P) to produce enolpyruvyl shikimate-3-phosphate and inorganic phosphate. The polypeptide is 3-phosphoshikimate 1-carboxyvinyltransferase (Bordetella bronchiseptica (strain ATCC BAA-588 / NCTC 13252 / RB50) (Alcaligenes bronchisepticus)).